We begin with the raw amino-acid sequence, 321 residues long: Phosphatidate cytidylyltransferase, mitochondrial (321 aa).

This sequence belongs to the TAM41 family. Requires Mg(2+) as cofactor. It depends on Co(2+) as a cofactor. Cu(2+) is required as a cofactor.

It is found in the mitochondrion inner membrane. The enzyme catalyses a 1,2-diacyl-sn-glycero-3-phosphate + CTP + H(+) = a CDP-1,2-diacyl-sn-glycerol + diphosphate. It functions in the pathway phospholipid metabolism; CDP-diacylglycerol biosynthesis; CDP-diacylglycerol from sn-glycerol 3-phosphate: step 3/3. Functionally, catalyzes the formation of CDP-diacylglycerol (CDP-DAG) from phosphatidic acid (PA) in the mitochondrial inner membrane. Required for the biosynthesis of the dimeric phospholipid cardiolipin, which stabilizes supercomplexes of the mitochondrial respiratory chain in the mitochondrial inner membrane. The chain is Phosphatidate cytidylyltransferase, mitochondrial from Caenorhabditis elegans.